The following is a 287-amino-acid chain: UPF0276 protein ACIAD0933 (287 aa).

Belongs to the UPF0276 family.

In Acinetobacter baylyi (strain ATCC 33305 / BD413 / ADP1), this protein is UPF0276 protein ACIAD0933.